The sequence spans 332 residues: UPF0194 membrane protein YbhG (332 aa).

A signal peptide spans 1-16; the sequence is MMKKPVVIGLAVVVLA. A coiled-coil region spans residues 108–209; sequence EEIAQAAAAV…LNLQDSTLIA (102 aa).

Belongs to the UPF0194 family.

The protein resides in the periplasm. The polypeptide is UPF0194 membrane protein YbhG (Escherichia coli (strain 55989 / EAEC)).